We begin with the raw amino-acid sequence, 36 residues long: Photosystem I reaction center subunit VIII (36 aa).

The helical transmembrane segment at 8–28 threads the bilayer; that stretch reads SVLVPLVGLVFPAIAMASLFL.

This sequence belongs to the PsaI family.

The protein localises to the plastid. The protein resides in the chloroplast thylakoid membrane. Its function is as follows. May help in the organization of the PsaL subunit. The sequence is that of Photosystem I reaction center subunit VIII from Helianthus annuus (Common sunflower).